Consider the following 1450-residue polypeptide: MSRGAPFPVPCPVLLGTFTDDSLEAQLHEYAKQGNCVKLKKILKKGVCVDAVNTQGQSALFVAALLGHVKLVDVLVDYGSDPNHRCFDGSTPVHAAAFSGNQWILSKLLTAGGDLRLHDEKGRNPQAWALTAGKDRSTQMVEFMQRCTSHMKAIIQGFSYDLLKKIDSPQRLIGSPPWFGSLIQGSPNSSPNRQLKPGIISAQNIYSFGFGKFYLTSGMQLTYPGSLPVIGEKEVVQADDEPTFSFFSGPYMVMTNLVWNRSRVTVKELNLPTRPHCSRLRLADLLIAEQEHSSNLRHPNLLQLMAVCLSRDLEKIRLVYERITVGTLFSVLHERRSQFPVLHMEVIVHLLLQVADALIYLHSRGFIHRSLSSYAVHIVSAGEARLTNLEYLTESQDSGAHRNVTRMPLPTQLYNWAAPEVVLQKAATVKSDIYSFSVIIQEILTDSIPWNGLDGSLVKETIALGNYLEADVRLPEPYYDIVKSGIHAKQKNRTMNLQDIRYILKNDLKEFIGAQKTQPTESPRGQSYEPHPDVNICLGLTSEYQKDPPDLDIKELKEMGSQPHSPTDHSFLTVKPTLAPQTLDSSLSAQKPDNANVPSPPAACLAEEVRSPTASQDSLCSFEINEIYSGCLTLGTDKEEECLGTAASPEGDRPNQGDELPSLEEELDKMERELHCFCEEDKSISEVDTDLLFEDDDWQSDSLGSLNLPEPTREAKGKTSSWSKTDEYVSKCVLNLKISQVMMQQSAEWLRKLEQEVEELEWAQKELDSQCSSLRDASLKFANAKFQPAVGPPSLAYLPPVMQLPGLKQPENGGTWLTLARSPGNEREFQEGHFSKKPEKLSACGWKPFTQVSEESRGDCSELNNQLPTLRGPGKQSTGEQLPSTQEARESLEKNTNQNSRSMASVSSEIYATKSRNNEDNGEAHLKWRLAVKEMAEKAVSGQLLLPPWNPQSSAPFESKVENESTPLPRPPIRGPESTEWQHILEYQRENDEPKGNTKFGKMDNSDCDKNKHSRWTGLQRFTGIRYPFFRNHEQPEQNEASQASCDTSVGTEKFYSTSSPIGDDFERFQDSFAQRQGYVEENFQIREIFEKNAEILTKPQFQAIQCAEDKQDETLGETPKELKEKNTSLTDIQDLSSITYDQDGYFKETSYKTPKLKHAPTSASTPLSPESISSAASHYEDCLENTTFHVKRGSTFCWNGQEAMRTLSAKFTTVRERAKSLESLLASSKSLPAKLTDSKRLCMLSETGSSNVSAAFVTSTHATKRKSLPRELAEATSQQHLDELPPPAQELLDEIEQLKQQQVSSLASHENTARDLSVTNKDKKHLEEQETNSSKDSSFLSSREIQDLEDTERAHSSLDEDLERFLQSPEENTALLDPTKGSTREKKNKDQDVVEQKRKKKESIKPERRESDSSLGTLEEDELKPCFWKRLGWSEPSRIIVLDQSDLSD.

3 ANK repeats span residues 27 to 54 (LHEY…AVNT), 55 to 84 (QGQS…DPNH), and 88 to 117 (DGST…DLRL). Residues serine 175 and serine 186 each carry the phosphoserine modification. Residues 199–512 (IISAQNIYSF…ILKNDLKEFI (314 aa)) form the Protein kinase domain. ATP is bound by residues 205 to 213 (IYSFGFGKF) and lysine 267. Serine 431 bears the Phosphoserine; by PLK1 mark. A phosphoserine mark is found at serine 561 and serine 662. The tract at residues 700–720 (SDSLGSLNLPEPTREAKGKTS) is disordered. The short motif at 791–797 (GPPSLAY) is the GPPX3Y element. Disordered stretches follow at residues 852–906 (VSEE…MASV), 947–977 (PPWN…RGPE), 992–1012 (DEPK…DKNK), and 1035–1062 (QPEQ…SSPI). 2 stretches are compositionally biased toward polar residues: residues 875 to 886 (KQSTGEQLPSTQ) and 894 to 906 (KNTN…MASV). The short motif at 889 to 897 (RESLEKNTN) is the D-box element. Residues 992-1011 (DEPKGNTKFGKMDNSDCDKN) show a composition bias toward basic and acidic residues. The span at 1038 to 1061 (QNEASQASCDTSVGTEKFYSTSSP) shows a compositional bias: polar residues. Serine 1060 and serine 1221 each carry phosphoserine. Disordered stretches follow at residues 1261–1282 (THAT…QQHL) and 1300–1418 (KQQQ…SLGT). Composition is skewed to polar residues over residues 1300–1311 (KQQQVSSLASHE) and 1332–1344 (TNSS…LSSR). Phosphoserine is present on residues serine 1357 and serine 1358. Composition is skewed to basic and acidic residues over residues 1383–1397 (STRE…VVEQ) and 1404–1413 (SIKPERRESD). Phosphoserine occurs at positions 1412 and 1449.

The protein belongs to the protein kinase superfamily. In terms of assembly, interacts with KIF23 and RBM44. Interacts with CEP55; inhibiting interaction between CEP55 and PDCD6IP/ALIX and TSG101. Post-translationally, phosphorylated on Thr residues by CDK1 during early phases of mitosis, promoting the interaction with PLK1 and recruitment to kinetochores. Phosphorylated on Ser-431 by PLK1 during late prometaphase promotes the rapid depletion from kinetochores and its subsequent degradation by the APC/C complex. As to expression, detected in testis and spermatogonia. Not detectable in the other tissues tested.

The protein resides in the cytoplasm. The protein localises to the midbody. It is found in the chromosome. Its subcellular location is the centromere. It localises to the kinetochore. Functionally, required both for the formation of intercellular bridges during meiosis and for kinetochore-microtubule attachment during mitosis. Intercellular bridges are evolutionarily conserved structures that connect differentiating germ cells and are required for spermatogenesis and male fertility. Acts by promoting the conversion of midbodies into intercellular bridges via its interaction with CEP55: interaction with CEP55 inhibits the interaction between CEP55 and PDCD6IP/ALIX and TSG101, blocking cell abscission and leading to transform midbodies into intercellular bridges. Also plays a role during mitosis: recruited to kinetochores by PLK1 during early mitosis and regulates the maturation of the outer kinetochores and microtubule attachment. Has no protein kinase activity in vitro. The protein is Inactive serine/threonine-protein kinase TEX14 (Tex14) of Mus musculus (Mouse).